The following is a 438-amino-acid chain: Iroquois-class homeodomain protein IRX-6 (438 aa).

Positions 143–205 form a DNA-binding region, homeobox; that stretch reads SAGRRKNATR…NARRRLKKEN (63 aa). Disordered regions lie at residues 205 to 270 and 388 to 438; these read NKMT…EAAV and PRDS…GAEG. Positions 214–223 are enriched in basic and acidic residues; sequence KGGEERKADS. Acidic residues predominate over residues 252–268; sequence LEDLEEEEEEEEAEEEA.

This sequence belongs to the TALE/IRO homeobox family. Expressed in a subset of retinal ganglion cells and bipolar cells; including in type 2 and type 3a bipolar cells.

Its subcellular location is the nucleus. Its function is as follows. Transcription factor. Binds to the iroquois binding site (IBS) motif of target genes to regulate gene expression; functions as a transcriptional activator or repressor. Modulates expression of RCVRN, VSX1, BHLHE22/BHLHB5 and TACR3/Nk3r. Required downstream of retinal bipolar cell specification for the terminal differentiation of type 2, type 3a and possibly type 6 bipolar cells. In Mus musculus (Mouse), this protein is Iroquois-class homeodomain protein IRX-6 (Irx6).